We begin with the raw amino-acid sequence, 232 residues long: MQKNAAHTYAISSLLVLSLTGCAWIPSTPLVQGATSAQPVPGPTPVANGSIFQSAQPINYGYQPLFEDRRPRNIGDTLTIVLQENVSASKSSSANASRDGKTNFGFDTVPRYLQGVFGNARADVEASGGNTFNGKGGANASNTFSGTLTVTVDQVLVNGNLHVVGEKQIAINQGTEFIRFSGVVNPRTISGSNTVPSTQVADARIEYVGNGYINEAQNMGWLQRFFLNLSPM.

The first 21 residues, 1–21 (MQKNAAHTYAISSLLVLSLTG), serve as a signal peptide directing secretion. Cys-22 carries the N-palmitoyl cysteine lipid modification. Residue Cys-22 is the site of S-diacylglycerol cysteine attachment.

Belongs to the FlgH family. As to quaternary structure, the basal body constitutes a major portion of the flagellar organelle and consists of four rings (L,P,S, and M) mounted on a central rod.

The protein localises to the cell outer membrane. Its subcellular location is the bacterial flagellum basal body. In terms of biological role, assembles around the rod to form the L-ring and probably protects the motor/basal body from shearing forces during rotation. The protein is Flagellar L-ring protein of Escherichia coli O6:H1 (strain CFT073 / ATCC 700928 / UPEC).